The chain runs to 133 residues: Putative dispanin subfamily A member 2d (133 aa).

The Extracellular segment spans residues 1-57; that stretch reads MNHTVQTFFSPVNSGQPPNYEMLKEEHKVAVLGVPHNPAPPTSTVIHIRSKTSVPHH. Residue Lys-24 forms a Glycyl lysine isopeptide (Lys-Gly) (interchain with G-Cter in ubiquitin) linkage. The chain crosses the membrane as a helical span at residues 58–78; it reads VVWSLFNTLFMNPCCLGFIAF. Over 79–107 the chain is Cytoplasmic; it reads AYSVKSRDRKMVGNVTGAQAYASTTKCLN. Residues Lys-83, Lys-88, and Lys-104 each participate in a glycyl lysine isopeptide (Lys-Gly) (interchain with G-Cter in ubiquitin) cross-link. Residues 108 to 128 form a helical membrane-spanning segment; the sequence is IWALILGILMTILLIIIPVLI. The Extracellular segment spans residues 129–133; sequence FQAHR.

It belongs to the CD225/Dispanin family.

The protein localises to the membrane. This chain is Putative dispanin subfamily A member 2d, found in Homo sapiens (Human).